Reading from the N-terminus, the 525-residue chain is cAMP-dependent protein kinase regulatory subunit (525 aa).

The interval 28–213 (QFCANWFNSK…RIRGSIGNNL (186 aa)) is dimerization and phosphorylation. Disordered stretches follow at residues 114–146 (MDAS…SSLG) and 170–196 (SVSA…TVIP). Residues 124-146 (PAPATPAAPAAPAAPAAPFSSLG) show a composition bias toward low complexity. Serine 170 carries the phosphoserine; by autocatalysis modification. A nucleoside 3',5'-cyclic phosphate is bound by residues 214-345 (LFRN…FLMD) and 348-472 (LFER…TYGD). 3',5'-cyclic AMP is bound by residues glutamate 295, arginine 304, and glutamate 417. The tract at residues 497–525 (SGADTSFPHPMDSSAKPGEGAWSAPNPFA) is disordered.

Belongs to the cAMP-dependent kinase regulatory chain family. As to quaternary structure, tetramer, composed of 2 regulatory (R) and 2 catalytic (C) subunits. In the presence of cAMP it dissociates into 2 active monomeric C subunits and an R dimer.

This Mycosarcoma maydis (Corn smut fungus) protein is cAMP-dependent protein kinase regulatory subunit (PKAR).